A 217-amino-acid chain; its full sequence is Putative 8-oxo-dGTP diphosphatase 3 (217 aa).

The Nudix hydrolase domain maps to 30–164; that stretch reads GRYGAAGLLL…PGFAASWQRL (135 aa). The disordered stretch occupies residues 67–92; the sequence is LPGGARDSHETPEQTAVRESSEEAGL. G70, E85, E88, and E89 together coordinate Mg(2+). The Nudix box signature appears at 70 to 91; sequence GARDSHETPEQTAVRESSEEAG.

Belongs to the Nudix hydrolase family. It depends on Mg(2+) as a cofactor. Mn(2+) is required as a cofactor.

The enzyme catalyses 8-oxo-dGTP + H2O = 8-oxo-dGMP + diphosphate + H(+). Functionally, may be involved in the GO system responsible for removing an oxidatively damaged form of guanine (7,8-dihydro-8-oxoguanine, 8-oxo-dGTP) from DNA and the nucleotide pool. 8-oxo-dGTP is inserted opposite dA and dC residues of template DNA with almost equal efficiency thus leading to A.T to G.C transversions. MutT specifically degrades 8-oxo-dGTP to the monophosphate. The sequence is that of Putative 8-oxo-dGTP diphosphatase 3 (mutT3) from Mycobacterium tuberculosis (strain CDC 1551 / Oshkosh).